The primary structure comprises 155 residues: Large ribosomal subunit protein bL9c (155 aa).

It belongs to the bacterial ribosomal protein bL9 family.

It localises to the plastid. The protein localises to the chloroplast. Functionally, binds to the 23S rRNA. The chain is Large ribosomal subunit protein bL9c from Porphyra purpurea (Red seaweed).